The chain runs to 1397 residues: Transcriptional activator cubitus interruptus (1397 aa).

The interaction with RDX stretch occupies residues 1 to 440 (MDAYALPTYF…YDCANADTTD (440 aa)). Disordered regions lie at residues 193–212 (GNRR…ASIS) and 361–383 (GPFK…QVEA). 5 consecutive C2H2-type zinc fingers follow at residues 451-476 (TNCH…NNDH), 484-511 (FVCR…MRRH), 517-541 (HKCT…LRSH), 547-572 (YTCE…NRTH), and 578-603 (YICK…KTVH). 2 disordered regions span residues 636–669 (EHNI…DISS) and 807–877 (DPLQ…NSTA). A compositionally biased stretch (low complexity) spans 657 to 669 (SSPSIKSESDISS). Composition is skewed to polar residues over residues 807-832 (DPLQ…SIQG) and 839-848 (QNSTASTYYG). The segment covering 849–863 (SMQSRRSSQSSQVSS) has biased composition (low complexity). Positions 1161 to 1397 (MTAVGGSFSQ…EENRYLQMMQ (237 aa)) are interaction with RDX.

It belongs to the GLI C2H2-type zinc-finger protein family. In terms of assembly, interacts with RDX. Interacts with cos. Interacts with slmb; the interaction is enhanced by phosphorylation by CkIalpha and dco. Post-translationally, polyubiquitinated by RDX in the presence of CUL3, which results in proteasomal degradation. In terms of processing, phosphorylated on multiple sites by protein kinase A (PKA) and phosphorylation by PKA primes further phosphorylation by CK1 and GSK3. Phosphorylation is essential for its proteolytic processing. cos recruits multiple kinases to promote efficient phosphorylation of ci while Hh signaling inhibits phosphorylation by restricting the accessibility of ci to the kinases. Phosphorylation by CkIalpha and dco enhances binding to Slmb, the F-box recognition component of the SCF(slmb) E3 ubiquitin-protein ligase required for ci processing. Transcriptional repressor ciR, a C-terminally truncated form, is generated from the full-length ci (ciFL/ci-155) through proteolytic processing. Hh suppresses the formation of ci75 and promotes the conversion of ci155 into a transcriptional activator (ci155A).

Its subcellular location is the nucleus. Functionally, has a dual function as a transcriptional activator and a repressor of the hedgehog (Hh) pathway. The full-length ci form (ciFL), acts as an activator (ciA) while ciR, its C-terminally truncated form, acts as a repressor. Involved in segment polarity. Required for the normal development of the posterior half of each embryonic segment. Engrailed protein directly represses ci expression in posterior compartment cells. Essential component of a hh-signaling pathway which regulates the Duox-dependent gut immune response to bacterial uracil; required to activate Cad99C-dependent endosome formation, norpA-dependent Ca2+ mobilization and p38 MAPK, which are essential steps in the Duox-dependent production of reactive oxygen species (ROS) in response to intestinal bacterial infection. The polypeptide is Transcriptional activator cubitus interruptus (ci) (Drosophila melanogaster (Fruit fly)).